A 171-amino-acid chain; its full sequence is Protein BTG1 (171 aa).

S159 is subject to Phosphoserine.

The protein belongs to the BTG family. Interacts with CNOT7 and CNOT8.

Anti-proliferative protein. The chain is Protein BTG1 (BTG1) from Bos taurus (Bovine).